The following is a 292-amino-acid chain: Acetylglutamate kinase (292 aa).

Substrate is bound by residues 64-65, Arg86, and Asn190; that span reads GG.

The protein belongs to the acetylglutamate kinase family. ArgB subfamily.

The protein resides in the cytoplasm. The catalysed reaction is N-acetyl-L-glutamate + ATP = N-acetyl-L-glutamyl 5-phosphate + ADP. It participates in amino-acid biosynthesis; L-arginine biosynthesis; N(2)-acetyl-L-ornithine from L-glutamate: step 2/4. Catalyzes the ATP-dependent phosphorylation of N-acetyl-L-glutamate. This Geotalea uraniireducens (strain Rf4) (Geobacter uraniireducens) protein is Acetylglutamate kinase.